The primary structure comprises 235 residues: Small ribosomal subunit protein uS2 (235 aa).

Belongs to the universal ribosomal protein uS2 family.

This is Small ribosomal subunit protein uS2 from Geobacillus sp. (strain WCH70).